The following is an 883-amino-acid chain: Probable ribonuclease ZC3H12C (883 aa).

Disordered regions lie at residues 53–109 and 139–158; these read QLSP…ISVE and DFKP…PPDV. At serine 230 the chain carries Phosphoserine. Residues 245–400 form the RNase NYN domain; the sequence is LRPIVIDGSN…LGRHGPSLDN (156 aa). A C3H1-type zinc finger spans residues 410–435; the sequence is EHKKQPCPYGKKCTYGHKCKYYHPER. 3 disordered regions span residues 456–551, 680–738, and 754–775; these read AKTA…FPPQ, FHDP…KAPH, and SRLY…EGLG. Positions 466-477 are enriched in polar residues; it reads KSNSVPCSTKAD. Positions 503 to 515 are enriched in basic and acidic residues; the sequence is LEEKLPTKNKLET. Residues 517–542 show a composition bias toward polar residues; that stretch reads SVPSLVSIPATSTAKPQSTTSLSNGL. A compositionally biased stretch (low complexity) spans 705 to 714; sequence HLALHLPHSA.

The protein belongs to the ZC3H12 family. Mg(2+) serves as cofactor.

May function as RNase and regulate the levels of target RNA species. The polypeptide is Probable ribonuclease ZC3H12C (ZC3H12C) (Homo sapiens (Human)).